Consider the following 1032-residue polypeptide: uncharacterized protein (1032 aa).

Topologically, residues 1–17 (MYEEIRMKFTDIFIRRP) are cytoplasmic. The chain crosses the membrane as a helical span at residues 18-36 (VLAVSISLLMIILGLQAIS). The Periplasmic segment spans residues 37–337 (KLAVREYPKM…TIAINSSIHE (301 aa)). The helical transmembrane segment at 338 to 357 (VIKTIGEATLIVLVVILMFI) threads the bilayer. Residues 358–363 (GSFRAI) are Cytoplasmic-facing. A helical membrane pass occupies residues 364–383 (LIPILAIPISLIGVLMLLQS). Topologically, residues 384-389 (FNFSIN) are periplasmic. A helical membrane pass occupies residues 390 to 411 (LMTLLALILAIGLVVDDAIVVL). At 412-438 (ENIDRHIKAGETPFRAAIIGTREIAVP) the chain is on the cytoplasmic side. Residues 439–457 (VISMTIALIAVYSPMALMG) traverse the membrane as a helical segment. At 458–470 (GITGTLFKEFALT) the chain is on the periplasmic side. A helical membrane pass occupies residues 471-493 (LAGAVFISGVVALTLSPMMSSKL). At 494-529 (LKSNAKPTWMEERVEHTLGKVNRVYEYMLDLVMLNR) the chain is on the cytoplasmic side. A helical membrane pass occupies residues 530–548 (KSMLAFAVVIFSTLPFLFN). Topologically, residues 549–852 (SLSSELTPNE…ARQLVQEGNA (304 aa)) are periplasmic. Residues 853-872 (LAVTFALAVIIIFLVLAIQF) form a helical membrane-spanning segment. The Cytoplasmic segment spans residues 873–878 (ESIRDP). The helical transmembrane segment at 879–898 (MVIMISVPLAVSGALVSLNI) threads the bilayer. Residues 899–910 (LSFFSIAGTTLN) are Periplasmic-facing. A helical transmembrane segment spans residues 911–932 (IYSQVGLITLVGLITKHGILMC). The Cytoplasmic segment spans residues 933–960 (EVAKEEQLNHGKTRIEAITHAAKVRLRP). A helical membrane pass occupies residues 961 to 979 (ILMTTAAMVAGLIPLLYAT). The Periplasmic segment spans residues 980–992 (GAGAVSRFSIGIV). The helical transmembrane segment at 993–1015 (IVAGLSIGTIFTLFVLPVVYSYV) threads the bilayer. The Cytoplasmic portion of the chain corresponds to 1016 to 1032 (ATEHKPLPVFDENKTTH).

This sequence belongs to the resistance-nodulation-cell division (RND) (TC 2.A.6) family.

It is found in the cell inner membrane. In terms of biological role, could be a drug efflux pump. This is an uncharacterized protein from Haemophilus influenzae (strain ATCC 51907 / DSM 11121 / KW20 / Rd).